Reading from the N-terminus, the 761-residue chain is Phosphoribosylformylglycinamidine synthase subunit PurL (761 aa).

The span at 1 to 13 (MTSRVDTVDNAAS) shows a compositional bias: polar residues. The tract at residues 1–23 (MTSRVDTVDNAASTPDHPQPFAE) is disordered. His-57 is an active-site residue. ATP is bound by residues Tyr-60 and Lys-104. Residue Glu-106 coordinates Mg(2+). Substrate contacts are provided by residues 107-110 (SHNH) and Arg-129. His-108 serves as the catalytic Proton acceptor. Asp-130 is a binding site for Mg(2+). Residue Gln-259 coordinates substrate. Asp-287 lines the Mg(2+) pocket. Position 331-333 (331-333 (ESQ)) interacts with substrate. ATP is bound by residues Asn-519 and Gly-556. Asn-557 is a binding site for Mg(2+). Residue Ser-559 participates in substrate binding.

The protein belongs to the FGAMS family. In terms of assembly, monomer. Part of the FGAM synthase complex composed of 1 PurL, 1 PurQ and 2 PurS subunits.

It is found in the cytoplasm. The catalysed reaction is N(2)-formyl-N(1)-(5-phospho-beta-D-ribosyl)glycinamide + L-glutamine + ATP + H2O = 2-formamido-N(1)-(5-O-phospho-beta-D-ribosyl)acetamidine + L-glutamate + ADP + phosphate + H(+). It participates in purine metabolism; IMP biosynthesis via de novo pathway; 5-amino-1-(5-phospho-D-ribosyl)imidazole from N(2)-formyl-N(1)-(5-phospho-D-ribosyl)glycinamide: step 1/2. Part of the phosphoribosylformylglycinamidine synthase complex involved in the purines biosynthetic pathway. Catalyzes the ATP-dependent conversion of formylglycinamide ribonucleotide (FGAR) and glutamine to yield formylglycinamidine ribonucleotide (FGAM) and glutamate. The FGAM synthase complex is composed of three subunits. PurQ produces an ammonia molecule by converting glutamine to glutamate. PurL transfers the ammonia molecule to FGAR to form FGAM in an ATP-dependent manner. PurS interacts with PurQ and PurL and is thought to assist in the transfer of the ammonia molecule from PurQ to PurL. In Mycobacteroides abscessus (strain ATCC 19977 / DSM 44196 / CCUG 20993 / CIP 104536 / JCM 13569 / NCTC 13031 / TMC 1543 / L948) (Mycobacterium abscessus), this protein is Phosphoribosylformylglycinamidine synthase subunit PurL.